An 83-amino-acid chain; its full sequence is U-actitoxin-Avd8d (83 aa).

The N-terminal stretch at 1–19 is a signal peptide; it reads MASTRLFVLLVIGTVLLCQ. Residues 20–38 constitute a propeptide that is removed on maturation; sequence VSGFLDELLAEHELPQDMT.

This sequence belongs to the sea anemone 8 toxin family.

The protein localises to the secreted. It localises to the nematocyst. The protein is U-actitoxin-Avd8d of Anemonia viridis (Snakelocks anemone).